A 101-amino-acid polypeptide reads, in one-letter code: Nucleoid-associated protein Bind_0255 (101 aa).

It belongs to the YbaB/EbfC family. Homodimer.

It localises to the cytoplasm. Its subcellular location is the nucleoid. Functionally, binds to DNA and alters its conformation. May be involved in regulation of gene expression, nucleoid organization and DNA protection. This chain is Nucleoid-associated protein Bind_0255, found in Beijerinckia indica subsp. indica (strain ATCC 9039 / DSM 1715 / NCIMB 8712).